Here is a 214-residue protein sequence, read N- to C-terminus: Adenylate kinase (214 aa).

10–15 (GAGKGT) is a binding site for ATP. Residues 30–59 (STGDMLRAAIKAGTELGKQAKSVIDAGQLV) are NMP. AMP-binding positions include Thr31, Arg36, 57 to 59 (QLV), 85 to 88 (GFPR), and Gln92. Residues 122-159 (GRRAHLASGRTYHNVYNPPKVEGKDDVTGEDLVIREDD) are LID. ATP is bound by residues Arg123 and 132–133 (TY). AMP contacts are provided by Arg156 and Arg167. Lys200 is a binding site for ATP.

Belongs to the adenylate kinase family. In terms of assembly, monomer.

The protein resides in the cytoplasm. The enzyme catalyses AMP + ATP = 2 ADP. The protein operates within purine metabolism; AMP biosynthesis via salvage pathway; AMP from ADP: step 1/1. Catalyzes the reversible transfer of the terminal phosphate group between ATP and AMP. Plays an important role in cellular energy homeostasis and in adenine nucleotide metabolism. The sequence is that of Adenylate kinase from Photobacterium profundum (strain SS9).